The chain runs to 696 residues: Spindle assembly checkpoint component MAD1 (696 aa).

Disordered regions lie at residues 1–22 (MSTGSSPFVDHKSNNSTISINN) and 394–415 (QIHANQQHKQQEQEKEENTENK). Over residues 402–413 (KQQEQEKEENTE) the composition is skewed to basic and acidic residues.

Belongs to the MAD1 family. In terms of assembly, component of the mitotic checkpoint complex (MCC).

Its subcellular location is the nucleus. Functionally, central component of the spindle assembly checkpoint which is a feedback control that prevents cells with incompletely assembled spindles from leaving mitosis. The sequence is that of Spindle assembly checkpoint component MAD1 from Candida albicans (strain SC5314 / ATCC MYA-2876) (Yeast).